Consider the following 490-residue polypeptide: Probable cytochrome P450 308a1 (490 aa).

Residue Cys-431 coordinates heme.

Belongs to the cytochrome P450 family. The cofactor is heme.

Its subcellular location is the endoplasmic reticulum membrane. The protein localises to the microsome membrane. Functionally, may be involved in the metabolism of insect hormones and in the breakdown of synthetic insecticides. The chain is Probable cytochrome P450 308a1 (Cyp308a1) from Drosophila melanogaster (Fruit fly).